Here is a 411-residue protein sequence, read N- to C-terminus: Ferrochelatase, mitochondrial (411 aa).

The transit peptide at 1–41 (MAAFRAAHRLLGHILRNESSAGLVTQRWSSSAAVASVPKSS) directs the protein to the mitochondrion. Residues 34–55 (VASVPKSSDPKPHAQPDKRKPK) are disordered. Residues 41–51 (SDPKPHAQPDK) are compositionally biased toward basic and acidic residues. The protoporphyrin IX site is built by R102, Y110, and S117. C183 provides a ligand contact to [2Fe-2S] cluster. Residues H217 and D370 contribute to the active site. Positions 390, 393, and 398 each coordinate [2Fe-2S] cluster.

Belongs to the ferrochelatase family. In terms of assembly, homodimer. Homotetramer. [2Fe-2S] cluster is required as a cofactor.

The protein resides in the mitochondrion inner membrane. The catalysed reaction is heme b + 2 H(+) = protoporphyrin IX + Fe(2+). It participates in porphyrin-containing compound metabolism; protoheme biosynthesis; protoheme from protoporphyrin-IX: step 1/1. Catalyzes the ferrous insertion into protoporphyrin IX. In Xenopus laevis (African clawed frog), this protein is Ferrochelatase, mitochondrial.